A 338-amino-acid chain; its full sequence is GDSL esterase/lipase At5g63170 (338 aa).

The N-terminal stretch at 1 to 23 (MNSLVIQTTIVLVSVISVSIVHA) is a signal peptide. S35 (nucleophile) is an active-site residue. Active-site residues include D313 and H316.

Belongs to the 'GDSL' lipolytic enzyme family.

The protein resides in the secreted. This is GDSL esterase/lipase At5g63170 from Arabidopsis thaliana (Mouse-ear cress).